A 671-amino-acid chain; its full sequence is Alpha-1,4-glucan:maltose-1-phosphate maltosyltransferase (671 aa).

3 residues coordinate alpha-maltose 1-phosphate: Lys-252, Gln-312, and Asp-347. The Nucleophile role is filled by Asp-382. Residue Asn-383 coordinates alpha-maltose 1-phosphate. The active-site Proton donor is Glu-411. Residue 521-522 coordinates alpha-maltose 1-phosphate; it reads KY.

Belongs to the glycosyl hydrolase 13 family. GlgE subfamily. Homodimer.

It carries out the reaction alpha-maltose 1-phosphate + [(1-&gt;4)-alpha-D-glucosyl](n) = [(1-&gt;4)-alpha-D-glucosyl](n+2) + phosphate. Functionally, maltosyltransferase that uses maltose 1-phosphate (M1P) as the sugar donor to elongate linear or branched alpha-(1-&gt;4)-glucans. Is involved in a branched alpha-glucan biosynthetic pathway from trehalose, together with TreS, Mak and GlgB. The polypeptide is Alpha-1,4-glucan:maltose-1-phosphate maltosyltransferase (Corynebacterium pseudotuberculosis (strain 1002)).